We begin with the raw amino-acid sequence, 374 residues long: Queuine tRNA-ribosyltransferase (374 aa).

The Proton acceptor role is filled by D89. Residues 89-93 (DSGGF), D143, Q187, and G214 each bind substrate. Residues 245 to 251 (GVGKPED) are RNA binding. D264 functions as the Nucleophile in the catalytic mechanism. An RNA binding; important for wobble base 34 recognition region spans residues 269-273 (TRNAR). Positions 302, 304, 307, and 333 each coordinate Zn(2+).

The protein belongs to the queuine tRNA-ribosyltransferase family. In terms of assembly, homodimer. Within each dimer, one monomer is responsible for RNA recognition and catalysis, while the other monomer binds to the replacement base PreQ1. Requires Zn(2+) as cofactor.

The enzyme catalyses 7-aminomethyl-7-carbaguanine + guanosine(34) in tRNA = 7-aminomethyl-7-carbaguanosine(34) in tRNA + guanine. It participates in tRNA modification; tRNA-queuosine biosynthesis. Functionally, catalyzes the base-exchange of a guanine (G) residue with the queuine precursor 7-aminomethyl-7-deazaguanine (PreQ1) at position 34 (anticodon wobble position) in tRNAs with GU(N) anticodons (tRNA-Asp, -Asn, -His and -Tyr). Catalysis occurs through a double-displacement mechanism. The nucleophile active site attacks the C1' of nucleotide 34 to detach the guanine base from the RNA, forming a covalent enzyme-RNA intermediate. The proton acceptor active site deprotonates the incoming PreQ1, allowing a nucleophilic attack on the C1' of the ribose to form the product. After dissociation, two additional enzymatic reactions on the tRNA convert PreQ1 to queuine (Q), resulting in the hypermodified nucleoside queuosine (7-(((4,5-cis-dihydroxy-2-cyclopenten-1-yl)amino)methyl)-7-deazaguanosine). The polypeptide is Queuine tRNA-ribosyltransferase (Shewanella sp. (strain MR-4)).